A 116-amino-acid chain; its full sequence is MRHRCRVPQLGRPADQRKALLRALTTELIRHGQITTTLTRAKAVRSQADKMITLAKDGSLAARRQAMGYIYDKQLVHRLFDQAQERYSNRNGGYTRVVRTLRRRGDNAEMAIIELV.

This sequence belongs to the bacterial ribosomal protein bL17 family. In terms of assembly, part of the 50S ribosomal subunit. Contacts protein L32.

The chain is Large ribosomal subunit protein bL17 from Gloeothece citriformis (strain PCC 7424) (Cyanothece sp. (strain PCC 7424)).